The primary structure comprises 214 residues: Pyridoxine/pyridoxamine 5'-phosphate oxidase (214 aa).

Substrate contacts are provided by residues 8–11 and Arg-66; that span reads RLSY. Residues 61–66, 76–77, Lys-83, and Gln-105 each bind FMN; these read RTVLLR and FT. Residues Tyr-123, Arg-127, and Ser-131 each contribute to the substrate site. A disordered region spans residues 126 to 146; the sequence is SRPRESQLAAHASDPQSAPVS. Residues 141–142 and Trp-187 contribute to the FMN site; that span reads QS. Residue 193–195 participates in substrate binding; the sequence is RMH. An FMN-binding site is contributed by Arg-197.

It belongs to the pyridoxamine 5'-phosphate oxidase family. As to quaternary structure, homodimer. The cofactor is FMN.

It catalyses the reaction pyridoxamine 5'-phosphate + O2 + H2O = pyridoxal 5'-phosphate + H2O2 + NH4(+). The enzyme catalyses pyridoxine 5'-phosphate + O2 = pyridoxal 5'-phosphate + H2O2. It participates in cofactor metabolism; pyridoxal 5'-phosphate salvage; pyridoxal 5'-phosphate from pyridoxamine 5'-phosphate: step 1/1. It functions in the pathway cofactor metabolism; pyridoxal 5'-phosphate salvage; pyridoxal 5'-phosphate from pyridoxine 5'-phosphate: step 1/1. Functionally, catalyzes the oxidation of either pyridoxine 5'-phosphate (PNP) or pyridoxamine 5'-phosphate (PMP) into pyridoxal 5'-phosphate (PLP). This is Pyridoxine/pyridoxamine 5'-phosphate oxidase from Deinococcus deserti (strain DSM 17065 / CIP 109153 / LMG 22923 / VCD115).